The following is a 328-amino-acid chain: Versiconal hemiacetal acetate esterase (328 aa).

The Involved in the stabilization of the negatively charged intermediate by the formation of the oxyanion hole motif lies at 82–84; the sequence is HGG. Residues Ser156, Asp260, and His290 contribute to the active site.

Belongs to the 'GDXG' lipolytic enzyme family.

It catalyses the reaction (2S,3S)-versiconal hemiacetal acetate + H2O = (2S-3S)-versiconal hemiacetal + acetate + H(+). It carries out the reaction (3S)-versiconol acetate + H2O = (S)-versiconol + acetate + H(+). Its pathway is mycotoxin biosynthesis. Versiconal hemiacetal acetate esterase; part of the fragmented gene cluster that mediates the biosynthesis of dothistromin (DOTH), a polyketide toxin very similar in structure to the aflatoxin precursor, versicolorin B. The first step of the pathway is the conversion of acetate to norsolorinic acid (NOR) and requires the fatty acid synthase subunits hexA and hexB, as well as the polyketide synthase pksA. PksA combines a hexanoyl starter unit and 7 malonyl-CoA extender units to synthesize the precursor NOR. The hexanoyl starter unit is provided to the acyl-carrier protein (ACP) domain by the fungal fatty acid synthase hexA/hexB. The second step is the conversion of NOR to averantin (AVN) and requires the norsolorinic acid ketoreductase nor1, which catalyzes the dehydration of norsolorinic acid to form (1'S)-averantin. The cytochrome P450 monooxygenase avnA then catalyzes the hydroxylation of AVN to 5'hydroxyaverantin (HAVN). The next step is performed by adhA that transforms HAVN to averufin (AVF). Averufin might then be converted to hydroxyversicolorone by cypX and avfA. Hydroxyversicolorone is further converted versiconal hemiacetal acetate (VHA) by moxY. VHA is then the substrate for the versiconal hemiacetal acetate esterase est1 to yield versiconal (VAL). Versicolorin B synthase vbsA then converts VAL to versicolorin B (VERB) by closing the bisfuran ring. Then, the activity of the versicolorin B desaturase verB leads to versicolorin A (VERA). DotB, a predicted chloroperoxidase, may perform epoxidation of the A-ring of VERA. Alternatively, a cytochrome P450, such as cypX or avnA could catalyze this step. It is also possible that another, uncharacterized, cytochrome P450 enzyme is responsible for this step. Opening of the epoxide could potentially be achieved by the epoxide hydrolase epoA. However, epoA seems not to be required for DOTH biosynthesis, but other epoxide hydrolases may have the ability to complement this hydrolysis. Alternatively, opening of the epoxide ring could be achieved non-enzymatically. The next step is the deoxygenation of ring A to yield the 5,8-dihydroxyanthraquinone which is most likely catalyzed by the NADPH dehydrogenase encoded by ver1. The last stages of DOTH biosynthesis are proposed to involve hydroxylation of the bisfuran. OrdB and norB might have oxidative roles here. An alternative possibility is that cytochrome P450 monoogenases such as avnA and cypX might perform these steps in addition to previously proposed steps. This Dothistroma septosporum (strain NZE10 / CBS 128990) (Red band needle blight fungus) protein is Versiconal hemiacetal acetate esterase.